Here is a 124-residue protein sequence, read N- to C-terminus: Putative RNA polymerase II transcriptional coactivator (124 aa).

Positions 1 to 61 (MSSSSSSEDE…GRLKDSDGNE (61 aa)) are disordered. Composition is skewed to basic and acidic residues over residues 11–21 (LEKKVTKEQKK) and 39–58 (QEVK…KDSD).

This sequence belongs to the transcriptional coactivator PC4 family.

The protein resides in the nucleus. Its function is as follows. General coactivator that functions cooperatively with TAFs and mediates functional interactions between upstream activators and the general transcriptional machinery. Binds single-stranded DNA. The polypeptide is Putative RNA polymerase II transcriptional coactivator (Caenorhabditis elegans).